The following is a 1041-amino-acid chain: Importin-9 (1041 aa).

The residue at position 2 (Ala-2) is an N-acetylalanine. Residues 43–119 form the Importin N-terminal domain; that stretch reads AEEQIKVLEV…RELLPNGLRE (77 aa). A disordered region spans residues 936–967; it reads QATPAEWSQDDSNDMWEDQEEEEEEEEDGLAG. Acidic residues predominate over residues 943 to 964; that stretch reads SQDDSNDMWEDQEEEEEEEEDG.

It belongs to the importin beta family. In terms of assembly, interacts with histones H2A, H2B, H3 and H4. The binding is coupled to RanGTP cycles. Interacts with AKIRIN2; promoting association with pre-assembled proteasomes. Associates with pre-assembled proteasomes; interaction is indirect and mediated via interaction with AKIRIN2. Interacts with PPP2R1A and PPP2R1B.

It is found in the cytoplasm. The protein localises to the nucleus. Functionally, nuclear transport receptor that mediates nuclear import of proteins, such as histones, proteasome and actin. Serves as receptor for nuclear localization signals (NLS) in cargo substrates. Is thought to mediate docking of the importin/substrate complex to the nuclear pore complex (NPC) through binding to nucleoporin and the complex is subsequently translocated through the pore by an energy requiring, Ran-dependent mechanism. At the nucleoplasmic side of the NPC, Ran binds to the importin, the importin/substrate complex dissociates and importin is re-exported from the nucleus to the cytoplasm where GTP hydrolysis releases Ran. The directionality of nuclear import is thought to be conferred by an asymmetric distribution of the GTP- and GDP-bound forms of Ran between the cytoplasm and nucleus. Mediates the import of pre-assembled proteasomes into the nucleus; AKIRIN2 acts as a molecular bridge between IPO9 and the proteasome complex. Mediates the nuclear import of histones H2A, H2B, H4 and H4. In addition to nuclear import, also acts as a chaperone for histones by preventing inappropriate non-nucleosomal interactions. Mediates the nuclear import of actin. This Homo sapiens (Human) protein is Importin-9.